Reading from the N-terminus, the 499-residue chain is UDP-N-acetylmuramoylalanine--D-glutamate ligase (499 aa).

129–135 (GTNGKTT) is an ATP binding site.

The protein belongs to the MurCDEF family.

The protein resides in the cytoplasm. It catalyses the reaction UDP-N-acetyl-alpha-D-muramoyl-L-alanine + D-glutamate + ATP = UDP-N-acetyl-alpha-D-muramoyl-L-alanyl-D-glutamate + ADP + phosphate + H(+). It functions in the pathway cell wall biogenesis; peptidoglycan biosynthesis. In terms of biological role, cell wall formation. Catalyzes the addition of glutamate to the nucleotide precursor UDP-N-acetylmuramoyl-L-alanine (UMA). This Ralstonia nicotianae (strain ATCC BAA-1114 / GMI1000) (Ralstonia solanacearum) protein is UDP-N-acetylmuramoylalanine--D-glutamate ligase.